Here is an 80-residue protein sequence, read N- to C-terminus: U-scoloptoxin(15)-Er1a (80 aa).

An N-terminal signal peptide occupies residues 1 to 22 (MQNKGVVLTLFLVVSMAIVISS).

It belongs to the scoloptoxin-15 family. Contains 2 disulfide bonds. As to expression, expressed by the venom gland.

It localises to the secreted. This Ethmostigmus rubripes (Giant centipede) protein is U-scoloptoxin(15)-Er1a.